The sequence spans 1339 residues: Receptor tyrosine-protein kinase erbB-3 (1339 aa).

The signal sequence occupies residues 1–19; that stretch reads MSAIGTLQVLGFLLSLARG. At 20 to 641 the chain is on the extracellular side; the sequence is SEMGNSQAVC…QAEVLMSKPH (622 aa). The N-linked (GlcNAc...) asparagine glycan is linked to asparagine 126. Intrachain disulfides connect cysteine 186–cysteine 194, cysteine 190–cysteine 202, cysteine 210–cysteine 218, cysteine 214–cysteine 226, cysteine 227–cysteine 235, cysteine 231–cysteine 243, cysteine 246–cysteine 255, cysteine 259–cysteine 286, cysteine 290–cysteine 301, cysteine 305–cysteine 320, and cysteine 323–cysteine 327. Asparagine 250 is a glycosylation site (N-linked (GlcNAc...) asparagine). N-linked (GlcNAc...) asparagine glycans are attached at residues asparagine 353, asparagine 408, asparagine 414, asparagine 437, and asparagine 469. Cystine bridges form between cysteine 500–cysteine 509, cysteine 504–cysteine 517, cysteine 520–cysteine 529, cysteine 533–cysteine 549, cysteine 552–cysteine 565, cysteine 556–cysteine 573, cysteine 576–cysteine 585, cysteine 589–cysteine 610, cysteine 613–cysteine 621, and cysteine 617–cysteine 629. N-linked (GlcNAc...) asparagine glycosylation occurs at asparagine 522. An N-linked (GlcNAc...) asparagine glycan is attached at asparagine 566. Asparagine 616 carries an N-linked (GlcNAc...) asparagine glycan. The chain crosses the membrane as a helical span at residues 642–662; it reads LVIAVTVGLTVIFLILGGSFL. Residues 663–1339 lie on the Cytoplasmic side of the membrane; it reads YWRGRRIQNK…LFPKANAQRI (677 aa). Serine 684 is modified (phosphoserine). Positions 707 to 964 constitute a Protein kinase domain; that stretch reads LRKLKVLGSG…TFKELANEFT (258 aa). Residues 713-721, lysine 740, 786-788, and 832-837 contribute to the ATP site; these read LGSGVFGTV, QYL, and DLALRN. Residue aspartate 832 is the Proton acceptor of the active site. Residue serine 980 is modified to Phosphoserine. Disordered stretches follow at residues 1028 to 1052, 1077 to 1156, and 1181 to 1212; these read LSLP…SGYM, RPIS…GNGY, and SVLG…PRPG. The span at 1185–1195 shows a compositional bias: acidic residues; the sequence is TEEEDEDEEYE.

Belongs to the protein kinase superfamily. Tyr protein kinase family. EGF receptor subfamily. Monomer and homodimer. Heterodimer with each of the other ERBB receptors (Potential). Interacts with CSPG5, PA2G4, GRB7 and MUC1. Interacts with MYOC. Found in a ternary complex with NRG1 and ITGAV:ITGB3 or ITGA6:ITGB4. In terms of processing, autophosphorylated. Ligand-binding increases phosphorylation on tyrosine residues and promotes its association with the p85 subunit of phosphatidylinositol 3-kinase. In terms of tissue distribution, in the muscle, expression localizes to the synaptic sites of muscle fibers.

The protein localises to the membrane. It catalyses the reaction L-tyrosyl-[protein] + ATP = O-phospho-L-tyrosyl-[protein] + ADP + H(+). Functionally, tyrosine-protein kinase that plays an essential role as cell surface receptor for neuregulins. Binds to neuregulin-1 (NRG1) and is activated by it; ligand-binding increases phosphorylation on tyrosine residues and promotes its association with the p85 subunit of phosphatidylinositol 3-kinase. May also be activated by CSPG5. Involved in the regulation of myeloid cell differentiation. The chain is Receptor tyrosine-protein kinase erbB-3 (Erbb3) from Mus musculus (Mouse).